Consider the following 106-residue polypeptide: uncharacterized protein (106 aa).

Disordered stretches follow at residues F33–D64 and N87–K106. The segment covering D52–N63 has biased composition (basic and acidic residues). The span at N87–P99 shows a compositional bias: polar residues.

The protein localises to the mitochondrion. This is an uncharacterized protein from Arabidopsis thaliana (Mouse-ear cress).